Reading from the N-terminus, the 234-residue chain is Probable pectate lyase F (234 aa).

Positions 1–17 are cleaved as a signal peptide; sequence MFSRIALLPAFLPVALA. N-linked (GlcNAc...) asparagine glycosylation is found at N168 and N194.

This sequence belongs to the polysaccharide lyase 3 family. Ca(2+) serves as cofactor.

The protein resides in the secreted. The catalysed reaction is Eliminative cleavage of (1-&gt;4)-alpha-D-galacturonan to give oligosaccharides with 4-deoxy-alpha-D-galact-4-enuronosyl groups at their non-reducing ends.. Pectinolytic enzyme consist of four classes of enzymes: pectin lyase, polygalacturonase, pectin methylesterase and rhamnogalacturonase. Among pectinolytic enzymes, pectin lyase is the most important in depolymerization of pectin, since it cleaves internal glycosidic bonds of highly methylated pectins. Favors pectate, the anion, over pectin, the methyl ester. This chain is Probable pectate lyase F (plyF), found in Aspergillus flavus (strain ATCC 200026 / FGSC A1120 / IAM 13836 / NRRL 3357 / JCM 12722 / SRRC 167).